The following is a 358-amino-acid chain: Alanine racemase (358 aa).

Lysine 34 acts as the Proton acceptor; specific for D-alanine in catalysis. Lysine 34 carries the post-translational modification N6-(pyridoxal phosphate)lysine. Arginine 129 contacts substrate. Tyrosine 254 functions as the Proton acceptor; specific for L-alanine in the catalytic mechanism. Substrate is bound at residue methionine 302.

This sequence belongs to the alanine racemase family. Pyridoxal 5'-phosphate is required as a cofactor.

It carries out the reaction L-alanine = D-alanine. Its pathway is amino-acid biosynthesis; D-alanine biosynthesis; D-alanine from L-alanine: step 1/1. Catalyzes the interconversion of L-alanine and D-alanine. May also act on other amino acids. This Vibrio atlanticus (strain LGP32) (Vibrio splendidus (strain Mel32)) protein is Alanine racemase (alr).